We begin with the raw amino-acid sequence, 366 residues long: Major outer membrane protein (366 aa).

The N-terminal stretch at 1 to 21 (MKKTLLATAIAGAMAASGAQA) is a signal peptide.

The protein belongs to the Gram-negative porin family. As to quaternary structure, homotrimer.

The protein resides in the cell outer membrane. The protein is Major outer membrane protein of Halomonas elongata (strain ATCC 33173 / DSM 2581 / NBRC 15536 / NCIMB 2198 / 1H9).